We begin with the raw amino-acid sequence, 356 residues long: Holliday junction branch migration complex subunit RuvB (356 aa).

The segment at 13–197 (LPPARRMLSA…FGIVARLEFY (185 aa)) is large ATPase domain (RuvB-L). Residues Leu36, Arg37, Gly78, Lys81, Thr82, Thr83, 144-146 (EDY), Arg187, Tyr197, and Arg234 contribute to the ATP site. Thr82 is a Mg(2+) binding site. Residues 198–268 (TPEELARIVK…IANRALAMLD (71 aa)) are small ATPAse domain (RuvB-S). Residues 271–356 (PQGFDLMDRK…RGNAENLFEE (86 aa)) form a head domain (RuvB-H) region. DNA is bound by residues Arg326 and Arg331.

It belongs to the RuvB family. As to quaternary structure, homohexamer. Forms an RuvA(8)-RuvB(12)-Holliday junction (HJ) complex. HJ DNA is sandwiched between 2 RuvA tetramers; dsDNA enters through RuvA and exits via RuvB. An RuvB hexamer assembles on each DNA strand where it exits the tetramer. Each RuvB hexamer is contacted by two RuvA subunits (via domain III) on 2 adjacent RuvB subunits; this complex drives branch migration. In the full resolvosome a probable DNA-RuvA(4)-RuvB(12)-RuvC(2) complex forms which resolves the HJ.

The protein localises to the cytoplasm. The catalysed reaction is ATP + H2O = ADP + phosphate + H(+). In terms of biological role, the RuvA-RuvB-RuvC complex processes Holliday junction (HJ) DNA during genetic recombination and DNA repair, while the RuvA-RuvB complex plays an important role in the rescue of blocked DNA replication forks via replication fork reversal (RFR). RuvA specifically binds to HJ cruciform DNA, conferring on it an open structure. The RuvB hexamer acts as an ATP-dependent pump, pulling dsDNA into and through the RuvAB complex. RuvB forms 2 homohexamers on either side of HJ DNA bound by 1 or 2 RuvA tetramers; 4 subunits per hexamer contact DNA at a time. Coordinated motions by a converter formed by DNA-disengaged RuvB subunits stimulates ATP hydrolysis and nucleotide exchange. Immobilization of the converter enables RuvB to convert the ATP-contained energy into a lever motion, pulling 2 nucleotides of DNA out of the RuvA tetramer per ATP hydrolyzed, thus driving DNA branch migration. The RuvB motors rotate together with the DNA substrate, which together with the progressing nucleotide cycle form the mechanistic basis for DNA recombination by continuous HJ branch migration. Branch migration allows RuvC to scan DNA until it finds its consensus sequence, where it cleaves and resolves cruciform DNA. The chain is Holliday junction branch migration complex subunit RuvB from Polaromonas naphthalenivorans (strain CJ2).